The chain runs to 164 residues: Protein SprT (164 aa).

A SprT-like domain is found at 13–156 (YQQAEAFFKR…LCKRCREILV (144 aa)). Histidine 69 is a Zn(2+) binding site. Residue glutamate 70 is part of the active site. A Zn(2+)-binding site is contributed by histidine 73.

It belongs to the SprT family. Requires Zn(2+) as cofactor.

It localises to the cytoplasm. The protein is Protein SprT of Pseudomonas putida (strain ATCC 700007 / DSM 6899 / JCM 31910 / BCRC 17059 / LMG 24140 / F1).